A 67-amino-acid polypeptide reads, in one-letter code: Cold shock-like protein CspE (67 aa).

Residues 5-64 enclose the CSD domain; that stretch reads GKVKWFNSEKGFGFIEVEGGNDVFVHFSAITGDGFKSLDEGQEVSFEVEDGNRGPQAKNV.

As to quaternary structure, homodimer.

It localises to the cytoplasm. Its function is as follows. Can bind to ATTGG and CCAAT motifs (Y-box motifs) of single-stranded oligonucleotides. In Bacillus anthracis, this protein is Cold shock-like protein CspE (cspE).